Reading from the N-terminus, the 215-residue chain is Small ribosomal subunit protein uS3 (215 aa).

The 69-residue stretch at 39 to 107 folds into the KH type-2 domain; the sequence is VRQYLQKRLA…PVHINIEEIR (69 aa).

Belongs to the universal ribosomal protein uS3 family. Part of the 30S ribosomal subunit. Forms a tight complex with proteins S10 and S14.

Functionally, binds the lower part of the 30S subunit head. Binds mRNA in the 70S ribosome, positioning it for translation. This chain is Small ribosomal subunit protein uS3, found in Nitrosomonas eutropha (strain DSM 101675 / C91 / Nm57).